A 237-amino-acid chain; its full sequence is BTB/POZ domain-containing protein KCTD6 (237 aa).

The 70-residue stretch at 12–81 folds into the BTB domain; the sequence is HPVTLNVGGH…LRTSELTLPV (70 aa).

As to quaternary structure, homopentamer. May be part of a cullin-containing E3 ubiquitin-protein ligase complex.

Its pathway is protein modification; protein ubiquitination. Its function is as follows. Probable substrate-specific adapter of a cullin-containing E3 ubiquitin-protein ligase complex mediating the ubiquitination and subsequent proteasomal degradation of target proteins. The sequence is that of BTB/POZ domain-containing protein KCTD6 (kctd6) from Danio rerio (Zebrafish).